We begin with the raw amino-acid sequence, 626 residues long: Basic helix-loop-helix ARNT-like protein 1 (626 aa).

Residues 1-58 (MADQRMDISSTISDFMSPGPTDLLSGSLSTSGVDCNRKRKGSATDYQESMDTDKDDPH) are disordered. Ser17 is subject to Phosphoserine; by GSK3-beta. Positions 17–32 (SPGPTDLLSGSLSTSG) are enriched in low complexity. At Thr21 the chain carries Phosphothreonine; by GSK3-beta. The Nuclear localization signal motif lies at 36–41 (NRKRKG). One can recognise a bHLH domain in the interval 72 to 125 (NAREAHSQIEKRRRDKMNSFIDELASLVPTCNAMSRKLDKLTVLRMAVQHMKTL). Residue Ser78 is modified to Phosphoserine. The residue at position 90 (Ser90) is a Phosphoserine; by CK2. The short motif at 142–152 (LSDDELKHLIL) is the Nuclear export signal 1 element. The 73-residue stretch at 143-215 (SDDELKHLIL…EQLSSSDTAP (73 aa)) folds into the PAS 1 domain. Lys252 is covalently cross-linked (Glycyl lysine isopeptide (Lys-Gly) (interchain with G-Cter in SUMO2 and SUMO3)). Residue Lys259 forms a Glycyl lysine isopeptide (Lys-Gly) (interchain with G-Cter in SUMO); alternate linkage. A Glycyl lysine isopeptide (Lys-Gly) (interchain with G-Cter in SUMO2); alternate cross-link involves residue Lys259. In terms of domain architecture, PAS 2 spans 326–396 (PQPVNGEIRV…ECHRQVLQTR (71 aa)). The Nuclear export signal 2 signature appears at 361–369 (LAYLPQELL). A PAC domain is found at 401-444 (TNCYKFKIKDGSFITLRSRWFSFMNPWTKEVEYIVSTNTVVLAN). Disordered stretches follow at residues 459-492 (SPHS…RAGA) and 511-595 (GSSP…SPSN). The tract at residues 508–588 (RIRGSSPSSC…IGIDMIDNDQ (81 aa)) is interaction with CIART. Positions 511–521 (GSSPSSCGSSP) are enriched in low complexity. The residue at position 538 (Lys538) is an N6-acetyllysine.

Component of the circadian clock oscillator which includes the CRY1/2 proteins, CLOCK or NPAS2, BMAL1 or BMAL2, CSNK1D and/or CSNK1E, TIMELESS and the PER1/2/3 proteins. Forms a heterodimer with CLOCK. The CLOCK-BMAL1 heterodimer is required for E-box-dependent transactivation, for CLOCK nuclear translocation and degradation, and, for phosphorylation of both CLOCK and BMAL1. Part of a nuclear complex which also includes RACK1 and PRKCA; RACK1 and PRKCA are recruited to the complex in a circadian manner. Interacts with NPAS2. Interacts with EZH2. Interacts with SUMO3. Interacts with SIRT1. Interacts with AHR. Interacts with ID1, ID2 and ID3. Interacts with DDX4. Interacts with OGT. Interacts with EED and SUZ12. Interacts with MTA1. Interacts with CIART. Interacts with HSP90. Interacts with KAT2B and EP300. Interacts with BHLHE40/DEC1 and BHLHE41/DEC2. Interacts with RELB and the interaction is enhanced in the presence of CLOCK. Interacts with PER1, PER2, CRY1 and CRY2 and this interaction requires a translocation to the nucleus. Interaction of the CLOCK-BMAL1 heterodimer with PER or CRY inhibits transcription activation. Interaction of the CLOCK-BMAL1 with CRY1 is independent of DNA but with PER2 is off DNA. The CLOCK-BMAL1 heterodimer interacts with GSK3B. Interacts with KDM5A. Interacts with KMT2A; in a circadian manner. Interacts with UBE3A. Interacts with PRKCG. Interacts with MAGEL2. Interacts with NCOA2. Interacts with THRAP3. The CLOCK-BMAL1 heterodimer interacts with PASD1. Interacts with PASD1. Interacts with USP9X. Interacts with PIWIL2 (via PIWI domain). Interacts with HDAC3. Interacts with HNF4A. Post-translationally, ubiquitinated, leading to its proteasomal degradation. Deubiquitinated by USP9X. In terms of processing, O-glycosylated; contains O-GlcNAc. O-glycosylation by OGT prevents protein degradation by inhibiting ubiquitination. It also stabilizes the CLOCK-BMAL1 heterodimer thereby increasing CLOCK-BMAL1-mediated transcription of genes in the negative loop of the circadian clock such as PER1/2/3 and CRY1/2. Acetylated on Lys-538 by CLOCK during the repression phase of the circadian cycle. Acetylation facilitates recruitment of CRY1 protein and initiates the repression phase of the circadian cycle. Acetylated at Lys-538 by KAT5 during the activation phase of the cycle, leading to recruitment of the positive transcription elongation factor b (P-TEFb) and BRD4, followed by productive elongation of circadian transcripts. Deacetylated by SIRT1, which may result in decreased protein stability. Post-translationally, phosphorylated upon dimerization with CLOCK. Phosphorylation enhances the transcriptional activity, alters the subcellular localization and decreases the stability of the CLOCK-BMAL1 heterodimer by promoting its degradation. Phosphorylation shows circadian variations in the liver with a peak between CT10 to CT14. Phosphorylation at Ser-90 by CK2 is essential for its nuclear localization, its interaction with CLOCK and controls CLOCK nuclear entry. Dephosphorylation at Ser-78 is important for dimerization with CLOCK and transcriptional activity. In terms of processing, sumoylated on Lys-259 upon dimerization with CLOCK. Predominantly conjugated to poly-SUMO2/3 rather than SUMO1 and the level of these conjugates undergo rhythmic variation, peaking at CT9-CT12. Sumoylation localizes it exclusively to the PML body and promotes its ubiquitination in the PML body, ubiquitin-dependent proteasomal degradation and the transcriptional activity of the CLOCK-BMAL1 heterodimer. Undergoes lysosome-mediated degradation in a time-dependent manner in the liver.

The protein resides in the nucleus. It localises to the cytoplasm. Its subcellular location is the PML body. In terms of biological role, transcriptional activator which forms a core component of the circadian clock. The circadian clock, an internal time-keeping system, regulates various physiological processes through the generation of approximately 24 hour circadian rhythms in gene expression, which are translated into rhythms in metabolism and behavior. It is derived from the Latin roots 'circa' (about) and 'diem' (day) and acts as an important regulator of a wide array of physiological functions including metabolism, sleep, body temperature, blood pressure, endocrine, immune, cardiovascular, and renal function. Consists of two major components: the central clock, residing in the suprachiasmatic nucleus (SCN) of the brain, and the peripheral clocks that are present in nearly every tissue and organ system. Both the central and peripheral clocks can be reset by environmental cues, also known as Zeitgebers (German for 'timegivers'). The predominant Zeitgeber for the central clock is light, which is sensed by retina and signals directly to the SCN. The central clock entrains the peripheral clocks through neuronal and hormonal signals, body temperature and feeding-related cues, aligning all clocks with the external light/dark cycle. Circadian rhythms allow an organism to achieve temporal homeostasis with its environment at the molecular level by regulating gene expression to create a peak of protein expression once every 24 hours to control when a particular physiological process is most active with respect to the solar day. Transcription and translation of core clock components (CLOCK, NPAS2, BMAL1, BMAL2, PER1, PER2, PER3, CRY1 and CRY2) plays a critical role in rhythm generation, whereas delays imposed by post-translational modifications (PTMs) are important for determining the period (tau) of the rhythms (tau refers to the period of a rhythm and is the length, in time, of one complete cycle). A diurnal rhythm is synchronized with the day/night cycle, while the ultradian and infradian rhythms have a period shorter and longer than 24 hours, respectively. Disruptions in the circadian rhythms contribute to the pathology of cardiovascular diseases, cancer, metabolic syndromes and aging. A transcription/translation feedback loop (TTFL) forms the core of the molecular circadian clock mechanism. Transcription factors, CLOCK or NPAS2 and BMAL1 or BMAL2, form the positive limb of the feedback loop, act in the form of a heterodimer and activate the transcription of core clock genes and clock-controlled genes (involved in key metabolic processes), harboring E-box elements (5'-CACGTG-3') within their promoters. The core clock genes: PER1/2/3 and CRY1/2 which are transcriptional repressors form the negative limb of the feedback loop and interact with the CLOCK|NPAS2-BMAL1|BMAL2 heterodimer inhibiting its activity and thereby negatively regulating their own expression. This heterodimer also activates nuclear receptors NR1D1/2 and RORA/B/G, which form a second feedback loop and which activate and repress BMAL1 transcription, respectively. BMAL1 positively regulates myogenesis and negatively regulates adipogenesis via the transcriptional control of the genes of the canonical Wnt signaling pathway. Plays a role in normal pancreatic beta-cell function; regulates glucose-stimulated insulin secretion via the regulation of antioxidant genes NFE2L2/NRF2 and its targets SESN2, PRDX3, CCLC and CCLM. Negatively regulates the mTORC1 signaling pathway; regulates the expression of MTOR and DEPTOR. Controls diurnal oscillations of Ly6C inflammatory monocytes; rhythmic recruitment of the PRC2 complex imparts diurnal variation to chemokine expression that is necessary to sustain Ly6C monocyte rhythms. Regulates the expression of HSD3B2, STAR, PTGS2, CYP11A1, CYP19A1 and LHCGR in the ovary and also the genes involved in hair growth. Plays an important role in adult hippocampal neurogenesis by regulating the timely entry of neural stem/progenitor cells (NSPCs) into the cell cycle and the number of cell divisions that take place prior to cell-cycle exit. Regulates the circadian expression of CIART and KLF11. The CLOCK-BMAL1 heterodimer regulates the circadian expression of SERPINE1/PAI1, VWF, B3, CCRN4L/NOC, NAMPT, DBP, MYOD1, PPARGC1A, PPARGC1B, SIRT1, GYS2, F7, NGFR, GNRHR, BHLHE40/DEC1, ATF4, MTA1, KLF10 and also genes implicated in glucose and lipid metabolism. Promotes rhythmic chromatin opening, regulating the DNA accessibility of other transcription factors. May play a role in spermatogenesis; contributes to the chromatoid body assembly and physiology. The NPAS2-BMAL1 heterodimer positively regulates the expression of MAOA, F7 and LDHA and modulates the circadian rhythm of daytime contrast sensitivity by regulating the rhythmic expression of adenylate cyclase type 1 (ADCY1) in the retina. The preferred binding motif for the CLOCK-BMAL1 heterodimer is 5'-CACGTGA-3', which contains a flanking adenine nucleotide at the 3-prime end of the canonical 6-nucleotide E-box sequence. CLOCK specifically binds to the half-site 5'-CAC-3', while BMAL1 binds to the half-site 5'-GTGA-3'. The CLOCK-BMAL1 heterodimer also recognizes the non-canonical E-box motifs 5'-AACGTGA-3' and 5'-CATGTGA-3'. Essential for the rhythmic interaction of CLOCK with ASS1 and plays a critical role in positively regulating CLOCK-mediated acetylation of ASS1. Plays a role in protecting against lethal sepsis by limiting the expression of immune checkpoint protein CD274 in macrophages in a PKM2-dependent manner. Regulates the diurnal rhythms of skeletal muscle metabolism via transcriptional activation of genes promoting triglyceride synthesis (DGAT2) and metabolic efficiency (COQ10B). The chain is Basic helix-loop-helix ARNT-like protein 1 from Rattus norvegicus (Rat).